The primary structure comprises 469 residues: Glutamine synthetase (469 aa).

A GS beta-grasp domain is found at 14–98 (NDVKYVDLRF…ITCDVLEPTT (85 aa)). Positions 106–469 (PRGIAKKAEA…PVEFDMYYSG (364 aa)) constitute a GS catalytic domain. Mg(2+) is bound by residues glutamate 131 and glutamate 133. Residue glutamate 209 participates in ATP binding. 2 residues coordinate Mg(2+): glutamate 214 and glutamate 221. Residues 265–266 (NG) and glycine 266 each bind L-glutamate. Histidine 270 is a Mg(2+) binding site. Residues 272–274 (HQS) and serine 274 each bind ATP. The L-glutamate site is built by arginine 322, glutamate 328, and arginine 340. 3 residues coordinate ATP: arginine 340, arginine 345, and lysine 353. Glutamate 358 lines the Mg(2+) pocket. Arginine 360 is a binding site for L-glutamate. At tyrosine 398 the chain carries O-AMP-tyrosine.

Belongs to the glutamine synthetase family. Oligomer of 12 subunits arranged in the form of two hexameric ring. It depends on Mg(2+) as a cofactor.

The protein localises to the cytoplasm. The enzyme catalyses L-glutamate + NH4(+) + ATP = L-glutamine + ADP + phosphate + H(+). With respect to regulation, the activity of this enzyme could be controlled by adenylation under conditions of abundant glutamine. In terms of biological role, catalyzes the ATP-dependent biosynthesis of glutamine from glutamate and ammonia. The sequence is that of Glutamine synthetase from Bradyrhizobium diazoefficiens (strain JCM 10833 / BCRC 13528 / IAM 13628 / NBRC 14792 / USDA 110).